Consider the following 313-residue polypeptide: Type II restriction enzyme BsuMI component YdiR (313 aa).

A disordered region spans residues 289–313 (FVSGDIVDENATTSSDDLPEDFENN).

BsuMI restriction activity requires YdiR, YdiS and YdjA.

It catalyses the reaction Endonucleolytic cleavage of DNA to give specific double-stranded fragments with terminal 5'-phosphates.. A P subtype restriction enzyme that recognizes the double-stranded sequence 5'-CTCGAG-3'; the cleavage site is unknown. The chain is Type II restriction enzyme BsuMI component YdiR (ydiR) from Bacillus subtilis (strain 168).